The sequence spans 802 residues: Copper-exporting P-type ATPase (802 aa).

HMA domains are found at residues 5–70 (KKTT…YGVA) and 72–138 (ETVE…YDAS). 4 residues coordinate Cu(+): C16, C19, C83, and C86. 6 helical membrane-spanning segments follow: residues 161-181 (LIISAVLSLPLLMLMFVHLFN), 192-212 (WFQFILATPVQFIIGWQFYVG), 224-244 (MDVLVAVGTSAAYFYSIYEMI), 256-276 (LYFETSAVLITLILFGKYLEA), 411-431 (YFVPIVVGIALLTFIVWITLV), and 438-458 (PALVASISVLVIACPCALGLA). D495 functions as the 4-aspartylphosphate intermediate in the catalytic mechanism. Mg(2+)-binding residues include D690 and D694. Transmembrane regions (helical) follow at residues 748–767 (LFWAFGYNIAGIPIAALGLL) and 771–790 (VAGAAMALSSVSVVTNALRL).

Belongs to the cation transport ATPase (P-type) (TC 3.A.3) family. Type IB subfamily.

It localises to the cell membrane. The catalysed reaction is Cu(+)(in) + ATP + H2O = Cu(+)(out) + ADP + phosphate + H(+). Its function is as follows. Involved in copper export. This chain is Copper-exporting P-type ATPase (copA), found in Staphylococcus aureus (strain bovine RF122 / ET3-1).